Reading from the N-terminus, the 146-residue chain is Inner membrane protein YdgK (146 aa).

At 1 to 12 (MTTTTPQRIGGW) the chain is on the cytoplasmic side. A helical transmembrane segment spans residues 13–33 (LLGPLAWLLVALLSTTLALLL). Over 34–59 (YTAALSSPQTFQTLGGQALTTQILWG) the chain is Periplasmic. A helical membrane pass occupies residues 60 to 80 (VSFITAIALWYYTLWLTIAFF). Topologically, residues 81–89 (KRRRCVPKH) are cytoplasmic. Residues 90–110 (YIIWLLISVLLAVKAFAFSPV) traverse the membrane as a helical segment. The Periplasmic portion of the chain corresponds to 111-112 (ED). The helical transmembrane segment at 113 to 133 (GIAVRQLLFTLLATALIVPYF) threads the bilayer. At 134–146 (KRSSRVKATFVNP) the chain is on the cytoplasmic side.

It to Synechocystis PCC 6803 sll0481.

The protein localises to the cell inner membrane. The polypeptide is Inner membrane protein YdgK (ydgK) (Escherichia coli (strain K12)).